We begin with the raw amino-acid sequence, 140 residues long: MAVTRTFSIIKPDATRRNLTGAVTKMLEEAGLRVVASKRIHMSREQAEGFYAVHKERPFFGELVEFMISGPVVVQVLEGEDAVKRNRDIMGATNPKDAAPGTIRKELAESIEANSVHGSDSEENAAIEIAYFFKPEEIVG.

Positions 11, 59, 87, 93, 104, and 114 each coordinate ATP. Histidine 117 functions as the Pros-phosphohistidine intermediate in the catalytic mechanism.

It belongs to the NDK family. In terms of assembly, homotetramer. Mg(2+) serves as cofactor.

It is found in the cytoplasm. It carries out the reaction a 2'-deoxyribonucleoside 5'-diphosphate + ATP = a 2'-deoxyribonucleoside 5'-triphosphate + ADP. It catalyses the reaction a ribonucleoside 5'-diphosphate + ATP = a ribonucleoside 5'-triphosphate + ADP. Functionally, major role in the synthesis of nucleoside triphosphates other than ATP. The ATP gamma phosphate is transferred to the NDP beta phosphate via a ping-pong mechanism, using a phosphorylated active-site intermediate. The protein is Nucleoside diphosphate kinase of Novosphingobium aromaticivorans (strain ATCC 700278 / DSM 12444 / CCUG 56034 / CIP 105152 / NBRC 16084 / F199).